The following is a 251-amino-acid chain: Endonuclease NucS (251 aa).

The segment covering 230–240 has biased composition (basic and acidic residues); it reads LEPPKKGNEKR. A disordered region spans residues 230-251; the sequence is LEPPKKGNEKRSKQKTLDFFTP.

This sequence belongs to the NucS endonuclease family. Homodimer. Interacts with PCNA.

It localises to the cytoplasm. Its activity is regulated as follows. Activity is modulated by PCNA. PCNA increases the binding affinity of NucS towards ssDNA as well as branched DNA substrates carrying either 3' or 5' flaps. PCNA is also required for optimal loading of NucS on its substrates and to direct activity towards ss/dsDNA junction. Its function is as follows. Cleaves both 3' and 5' ssDNA extremities of branched DNA structures. Binds to ssDNA. The polypeptide is Endonuclease NucS (Pyrococcus abyssi (strain GE5 / Orsay)).